The chain runs to 357 residues: DNA replication and repair protein RecF (357 aa).

ATP is bound at residue 30-37; it reads GPNGSGKT.

It belongs to the RecF family.

The protein resides in the cytoplasm. Functionally, the RecF protein is involved in DNA metabolism; it is required for DNA replication and normal SOS inducibility. RecF binds preferentially to single-stranded, linear DNA. It also seems to bind ATP. The sequence is that of DNA replication and repair protein RecF from Vibrio campbellii (strain ATCC BAA-1116).